We begin with the raw amino-acid sequence, 325 residues long: Ribonucleoside-diphosphate reductase small chain (325 aa).

Fe cation contacts are provided by Asp-76, Glu-107, and His-110. Tyr-114 is an active-site residue. Glu-170, Glu-204, and His-207 together coordinate Fe cation.

It belongs to the ribonucleoside diphosphate reductase small chain family. In terms of assembly, heterodimer of a large and a small subunit. It depends on Fe cation as a cofactor.

It catalyses the reaction a 2'-deoxyribonucleoside 5'-diphosphate + [thioredoxin]-disulfide + H2O = a ribonucleoside 5'-diphosphate + [thioredoxin]-dithiol. Its function is as follows. Provides the precursors necessary for DNA synthesis. Catalyzes the biosynthesis of deoxyribonucleotides from the corresponding ribonucleotides. The chain is Ribonucleoside-diphosphate reductase small chain from Encephalitozoon cuniculi (strain GB-M1) (Microsporidian parasite).